A 78-amino-acid chain; its full sequence is Large ribosomal subunit protein bL28 (78 aa).

This sequence belongs to the bacterial ribosomal protein bL28 family.

This Prochlorococcus marinus (strain SARG / CCMP1375 / SS120) protein is Large ribosomal subunit protein bL28.